A 168-amino-acid polypeptide reads, in one-letter code: MLAIHSLSSTPCSSGLTSPPKSTLLTKSSFHGLRLPSVNLSSSLRLRVQTPPSSVVVMVKKEDELKELRTKTNEQLNEEILQLKGELFMLRLQRSARENFKPSDFGRMRKRVARMLTVKREREIEQGVGKRLSRKLDKAWKRSIVVRPPPSLKKLQEKATAEAEAEKA.

Residues 1–20 (MLAIHSLSSTPCSSGLTSPP) form a disordered region. The transit peptide at 1–58 (MLAIHSLSSTPCSSGLTSPPKSTLLTKSSFHGLRLPSVNLSSSLRLRVQTPPSSVVVM) directs the protein to the chloroplast.

Component of the chloroplast large ribosomal subunit (LSU). Mature 70S chloroplast ribosomes of higher plants consist of a small (30S) and a large (50S) subunit. The 30S small subunit contains 1 molecule of ribosomal RNA (16S rRNA) and 24 different proteins. The 50S large subunit contains 3 rRNA molecules (23S, 5S and 4.5S rRNA) and 33 different proteins.

Its subcellular location is the plastid. The protein localises to the chloroplast. In terms of biological role, component of the chloroplast ribosome (chloro-ribosome), a dedicated translation machinery responsible for the synthesis of chloroplast genome-encoded proteins, including proteins of the transcription and translation machinery and components of the photosynthetic apparatus. The protein is Large ribosomal subunit protein uL29c (RPL29) of Spinacia oleracea (Spinach).